The sequence spans 571 residues: Sulfite reductase [NADPH] hemoprotein beta-component (571 aa).

Residues cysteine 435, cysteine 441, cysteine 480, and cysteine 484 each contribute to the [4Fe-4S] cluster site. Cysteine 484 lines the siroheme pocket.

This sequence belongs to the nitrite and sulfite reductase 4Fe-4S domain family. As to quaternary structure, alpha(8)-beta(8). The alpha component is a flavoprotein, the beta component is a hemoprotein. Siroheme serves as cofactor. It depends on [4Fe-4S] cluster as a cofactor.

The enzyme catalyses hydrogen sulfide + 3 NADP(+) + 3 H2O = sulfite + 3 NADPH + 4 H(+). Its pathway is sulfur metabolism; hydrogen sulfide biosynthesis; hydrogen sulfide from sulfite (NADPH route): step 1/1. In terms of biological role, component of the sulfite reductase complex that catalyzes the 6-electron reduction of sulfite to sulfide. This is one of several activities required for the biosynthesis of L-cysteine from sulfate. This chain is Sulfite reductase [NADPH] hemoprotein beta-component, found in Musicola paradisiaca (strain Ech703) (Dickeya paradisiaca).